A 425-amino-acid polypeptide reads, in one-letter code: SWI5-dependent HO expression protein 3 (425 aa).

Positions 24–45 (NLESSPTKDRNTSSQNASSSRV) are disordered. Residues 35–45 (TSSQNASSSRV) show a composition bias toward polar residues. Positions 68 to 197 (QNLLSKLELA…LELSNQNLNY (130 aa)) form a coiled coil. A disordered region spans residues 322-425 (RKTPNTNDSS…NSMVVHGAQS (104 aa)). Residues 326-338 (NTNDSSSNGNSSN) are compositionally biased toward low complexity. At S343 the chain carries Phosphoserine. 2 stretches are compositionally biased toward polar residues: residues 345–358 (YTAS…SIPK) and 382–397 (KTNV…SPTI). Phosphoserine is present on S394.

The protein belongs to the SHE3 family. Interacts with SHE2 and MYO4.

It localises to the endoplasmic reticulum membrane. Functionally, RNA-binding protein that binds specific mRNAs including the ASH1 mRNA, coding for a repressor of the HO endonuclease. Part of the mRNA localization machinery that restricts accumulation of certain proteins to the bud and in the daughter cell. Required for the delivery of cortical endoplasmic reticulum into the emerging bud. This Saccharomyces cerevisiae (strain ATCC 204508 / S288c) (Baker's yeast) protein is SWI5-dependent HO expression protein 3 (SHE3).